The sequence spans 402 residues: Nicotinate phosphoribosyltransferase (402 aa).

Phosphohistidine; by autocatalysis is present on His226.

Belongs to the NAPRTase family. Post-translationally, transiently phosphorylated on a His residue during the reaction cycle. Phosphorylation strongly increases the affinity for substrates and increases the rate of nicotinate D-ribonucleotide production. Dephosphorylation regenerates the low-affinity form of the enzyme, leading to product release.

It catalyses the reaction nicotinate + 5-phospho-alpha-D-ribose 1-diphosphate + ATP + H2O = nicotinate beta-D-ribonucleotide + ADP + phosphate + diphosphate. Its pathway is cofactor biosynthesis; NAD(+) biosynthesis; nicotinate D-ribonucleotide from nicotinate: step 1/1. Its function is as follows. Catalyzes the synthesis of beta-nicotinate D-ribonucleotide from nicotinate and 5-phospho-D-ribose 1-phosphate at the expense of ATP. This is Nicotinate phosphoribosyltransferase from Chromobacterium violaceum (strain ATCC 12472 / DSM 30191 / JCM 1249 / CCUG 213 / NBRC 12614 / NCIMB 9131 / NCTC 9757 / MK).